The chain runs to 161 residues: Lipoprotein signal peptidase (161 aa).

A run of 3 helical transmembrane segments spans residues 6 to 26 (ILFL…KFYV), 67 to 87 (GLFF…YLIK), and 90 to 110 (VSDL…MGNL). Residues Asp-121 and Asp-139 contribute to the active site. A helical transmembrane segment spans residues 134–154 (AFNIADTAISIGVLFLVVDMI).

The protein belongs to the peptidase A8 family.

It localises to the cell inner membrane. The enzyme catalyses Release of signal peptides from bacterial membrane prolipoproteins. Hydrolyzes -Xaa-Yaa-Zaa-|-(S,diacylglyceryl)Cys-, in which Xaa is hydrophobic (preferably Leu), and Yaa (Ala or Ser) and Zaa (Gly or Ala) have small, neutral side chains.. The protein operates within protein modification; lipoprotein biosynthesis (signal peptide cleavage). Its function is as follows. This protein specifically catalyzes the removal of signal peptides from prolipoproteins. The chain is Lipoprotein signal peptidase from Syntrophus aciditrophicus (strain SB).